The primary structure comprises 1252 residues: Guanine nucleotide exchange factor SDC25 (1252 aa).

One can recognise an SH3 domain in the interval 26–97 (QPIDVVECTY…PPSFTRSILN (72 aa)). Disordered regions lie at residues 409–454 (IPAS…DTIW) and 623–648 (LNLD…DEYE). Residues 416–428 (TSCSSETSHHSPS) are compositionally biased toward low complexity. The 133-residue stretch at 782-914 (SNNRIKGGSK…LLKEVNQKFK (133 aa)) folds into the N-terminal Ras-GEF domain. The 248-residue stretch at 952–1199 (DPVLFATQLT…YQLSLIIEPK (248 aa)) folds into the Ras-GEF domain. Residues 1201-1252 (RKKVVPNSNSNNKSQEKSRDDQTDEGKTSTKKDRFSKFQLHKTKKKAPKVSK) are disordered. Residues 1214–1236 (SQEKSRDDQTDEGKTSTKKDRFS) are compositionally biased toward basic and acidic residues. A compositionally biased stretch (basic residues) spans 1239–1252 (QLHKTKKKAPKVSK).

Its function is as follows. Promotes the exchange of Ras-bound GDP by GTP. In Saccharomyces cerevisiae (strain YJM789) (Baker's yeast), this protein is Guanine nucleotide exchange factor SDC25 (SDC25).